The primary structure comprises 490 residues: Betaine aldehyde dehydrogenase (490 aa).

Residues serine 26, isoleucine 27, and aspartate 93 each coordinate K(+). 150 to 152 provides a ligand contact to NAD(+); it reads GAW. Lysine 162 serves as the catalytic Charge relay system. NAD(+)-binding positions include 176-179 and 230-233; these read KPSE and GVET. Leucine 246 serves as a coordination point for K(+). Catalysis depends on glutamate 252, which acts as the Proton acceptor. NAD(+) is bound by residues glycine 254, cysteine 286, and glutamate 387. The active-site Nucleophile is the cysteine 286. Cysteine sulfenic acid (-SOH) is present on cysteine 286. Residues lysine 457 and glycine 460 each coordinate K(+). Catalysis depends on glutamate 464, which acts as the Charge relay system.

The protein belongs to the aldehyde dehydrogenase family. Dimer of dimers. K(+) is required as a cofactor.

The enzyme catalyses betaine aldehyde + NAD(+) + H2O = glycine betaine + NADH + 2 H(+). It functions in the pathway amine and polyamine biosynthesis; betaine biosynthesis via choline pathway; betaine from betaine aldehyde: step 1/1. In terms of biological role, involved in the biosynthesis of the osmoprotectant glycine betaine. Catalyzes the irreversible oxidation of betaine aldehyde to the corresponding acid. This Acinetobacter baumannii (strain AB307-0294) protein is Betaine aldehyde dehydrogenase.